The sequence spans 342 residues: tRNA N6-adenosine threonylcarbamoyltransferase (342 aa).

Fe cation is bound by residues His111 and His115. Substrate-binding positions include 134–138, Asp167, Gly180, and Asn275; that span reads LVSGG. Asp303 is a binding site for Fe cation.

The protein belongs to the KAE1 / TsaD family. Requires Fe(2+) as cofactor.

The protein localises to the cytoplasm. The catalysed reaction is L-threonylcarbamoyladenylate + adenosine(37) in tRNA = N(6)-L-threonylcarbamoyladenosine(37) in tRNA + AMP + H(+). Its function is as follows. Required for the formation of a threonylcarbamoyl group on adenosine at position 37 (t(6)A37) in tRNAs that read codons beginning with adenine. Is involved in the transfer of the threonylcarbamoyl moiety of threonylcarbamoyl-AMP (TC-AMP) to the N6 group of A37, together with TsaE and TsaB. TsaD likely plays a direct catalytic role in this reaction. The protein is tRNA N6-adenosine threonylcarbamoyltransferase of Paraburkholderia xenovorans (strain LB400).